Consider the following 740-residue polypeptide: Phosphoribosylformylglycinamidine synthase subunit PurL (740 aa).

Residue His-53 is part of the active site. Residues Tyr-56 and Lys-95 each contribute to the ATP site. Glu-97 is a Mg(2+) binding site. Substrate is bound by residues 98 to 101 (SHNH) and Arg-120. The active-site Proton acceptor is His-99. Asp-121 is a Mg(2+) binding site. Gln-244 serves as a coordination point for substrate. Position 274 (Asp-274) interacts with Mg(2+). Residue 318 to 320 (ESQ) participates in substrate binding. Asp-501 and Gly-538 together coordinate ATP. A Mg(2+)-binding site is contributed by Asn-539. Ser-541 provides a ligand contact to substrate.

The protein belongs to the FGAMS family. As to quaternary structure, monomer. Part of the FGAM synthase complex composed of 1 PurL, 1 PurQ and 2 PurS subunits.

Its subcellular location is the cytoplasm. It catalyses the reaction N(2)-formyl-N(1)-(5-phospho-beta-D-ribosyl)glycinamide + L-glutamine + ATP + H2O = 2-formamido-N(1)-(5-O-phospho-beta-D-ribosyl)acetamidine + L-glutamate + ADP + phosphate + H(+). Its pathway is purine metabolism; IMP biosynthesis via de novo pathway; 5-amino-1-(5-phospho-D-ribosyl)imidazole from N(2)-formyl-N(1)-(5-phospho-D-ribosyl)glycinamide: step 1/2. In terms of biological role, part of the phosphoribosylformylglycinamidine synthase complex involved in the purines biosynthetic pathway. Catalyzes the ATP-dependent conversion of formylglycinamide ribonucleotide (FGAR) and glutamine to yield formylglycinamidine ribonucleotide (FGAM) and glutamate. The FGAM synthase complex is composed of three subunits. PurQ produces an ammonia molecule by converting glutamine to glutamate. PurL transfers the ammonia molecule to FGAR to form FGAM in an ATP-dependent manner. PurS interacts with PurQ and PurL and is thought to assist in the transfer of the ammonia molecule from PurQ to PurL. This Lactobacillus delbrueckii subsp. bulgaricus (strain ATCC 11842 / DSM 20081 / BCRC 10696 / JCM 1002 / NBRC 13953 / NCIMB 11778 / NCTC 12712 / WDCM 00102 / Lb 14) protein is Phosphoribosylformylglycinamidine synthase subunit PurL.